Here is a 229-residue protein sequence, read N- to C-terminus: Dolichyldiphosphatase 1 (229 aa).

Helical transmembrane passes span 27 to 47 (LFNA…ITLI), 94 to 114 (MPSS…LFYL), 120 to 140 (FGSK…AAGV), and 156 to 176 (FCGS…IEYI).

Belongs to the dolichyldiphosphatase family.

It localises to the endoplasmic reticulum membrane. The catalysed reaction is a di-trans,poly-cis-dolichyl diphosphate + H2O = a di-trans,poly-cis-dolichyl phosphate + phosphate + H(+). The protein operates within protein modification; protein glycosylation. Required for efficient N-glycosylation. Necessary for maintaining optimal levels of dolichol-linked oligosaccharides. Hydrolyzes dolichyl pyrophosphate at a very high rate and dolichyl monophosphate at a much lower rate. Does not act on phosphatidate. The chain is Dolichyldiphosphatase 1 (dolpp1) from Dictyostelium discoideum (Social amoeba).